Reading from the N-terminus, the 278-residue chain is Tryptophan synthase alpha chain (278 aa).

Residues Glu50 and Asp61 each act as proton acceptor in the active site.

The protein belongs to the TrpA family. Tetramer of two alpha and two beta chains.

The enzyme catalyses (1S,2R)-1-C-(indol-3-yl)glycerol 3-phosphate + L-serine = D-glyceraldehyde 3-phosphate + L-tryptophan + H2O. Its pathway is amino-acid biosynthesis; L-tryptophan biosynthesis; L-tryptophan from chorismate: step 5/5. In terms of biological role, the alpha subunit is responsible for the aldol cleavage of indoleglycerol phosphate to indole and glyceraldehyde 3-phosphate. The protein is Tryptophan synthase alpha chain of Methylorubrum populi (strain ATCC BAA-705 / NCIMB 13946 / BJ001) (Methylobacterium populi).